A 255-amino-acid chain; its full sequence is Venom allergen-1 (255 aa).

Positions 1-21 (MASHVIVKFITAAILIGSCYA) are cleaved as a signal peptide. The SCP domain maps to 65-210 (LKKHNELRAE…VIKYYLVCNY (146 aa)). 2 N-linked (GlcNAc...) asparagine glycosylation sites follow: asparagine 146 and asparagine 209.

This sequence belongs to the CRISP family. Interacts with human LRPPRC; the interaction interrupts association between BECN1 and LRPPRC. Interacts with human CD4. In terms of assembly, (Microbial infection) Interacts with Zika virus envelope protein E and Zika virus-like particles; the interaction does not affect Zika virus replication in human endothelial cells and keratinocytes. Saliva (at protein level). Female salivary gland. No or low-level expression in female hemolymph, midgut, Malpighian tubule system and ovary. No or low-level expression in male tissues.

It is found in the secreted. The protein resides in the host endosome. Its subcellular location is the host mitochondrion. In terms of biological role, activates autophagy in human monocytic cells, dendritic cells and macrophages. Promotes activation of human CD4(+) T-cells. Does not affect cytokine expression in human monocytic cells. Functionally, (Microbial infection) Promotes dengue virus type 2 replication in human monocytic cells, dendritic cells and macrophages. Pro-viral properties are linked to BECN1-mediated autophagy activation in the host. Does not directly interact with the purified envelope protein of dengue virus type 2. Its function is as follows. (Microbial infection) Promotes Zika virus replication in human monocytic cells, dendritic cells and macrophages. Facilitates Zika virus transmission from infected mosquitoes to the host in mouse model. Pro-viral properties are linked to BECN1-mediated autophagy activation in the host. Does not affect Zika virus replication in human endothelial cells and keratinocytes. (Microbial infection) Promotes Semliki Forest virus replication in human monocytic cells. In terms of biological role, (Microbial infection) Does not influence Batai virus replication in human monocytic cells. The sequence is that of Venom allergen-1 from Aedes aegypti (Yellowfever mosquito).